Reading from the N-terminus, the 100-residue chain is Large ribosomal subunit protein bL28 (100 aa).

It belongs to the bacterial ribosomal protein bL28 family.

The protein is Large ribosomal subunit protein bL28 of Ehrlichia ruminantium (strain Welgevonden).